Here is a 203-residue protein sequence, read N- to C-terminus: MSRTARIERVTKETKVLVEIDLDGTGKADIETGVGFYDHMLHQIARHGGFDLTVHTVGDLHIDAHHTMEDAALALGAAVDRALGDRAGIRRYGAATVPMDEVLVRAAVDLSGRPYVVHDEPPLAPYIGPVYPTSMTRHIWESFGQSARITLHVDVLRAARPGGHPDAHHVVEAQFKAVSRALREATSLDPRFTGVVPSTKGTL.

The protein belongs to the imidazoleglycerol-phosphate dehydratase family.

Its subcellular location is the cytoplasm. It carries out the reaction D-erythro-1-(imidazol-4-yl)glycerol 3-phosphate = 3-(imidazol-4-yl)-2-oxopropyl phosphate + H2O. The protein operates within amino-acid biosynthesis; L-histidine biosynthesis; L-histidine from 5-phospho-alpha-D-ribose 1-diphosphate: step 6/9. This is Imidazoleglycerol-phosphate dehydratase from Salinispora arenicola (strain CNS-205).